The following is a 344-amino-acid chain: tRNA N6-adenosine threonylcarbamoyltransferase (344 aa).

H111 and H115 together coordinate Fe cation. Substrate is bound by residues 134–138, D167, G180, and N277; that span reads LVSGG. D305 serves as a coordination point for Fe cation.

It belongs to the KAE1 / TsaD family. The cofactor is Fe(2+).

It localises to the cytoplasm. It carries out the reaction L-threonylcarbamoyladenylate + adenosine(37) in tRNA = N(6)-L-threonylcarbamoyladenosine(37) in tRNA + AMP + H(+). In terms of biological role, required for the formation of a threonylcarbamoyl group on adenosine at position 37 (t(6)A37) in tRNAs that read codons beginning with adenine. Is involved in the transfer of the threonylcarbamoyl moiety of threonylcarbamoyl-AMP (TC-AMP) to the N6 group of A37, together with TsaE and TsaB. TsaD likely plays a direct catalytic role in this reaction. The polypeptide is tRNA N6-adenosine threonylcarbamoyltransferase (Glaesserella parasuis serovar 5 (strain SH0165) (Haemophilus parasuis)).